The sequence spans 593 residues: Cyclin-dependent kinase-like 3 (593 aa).

The region spanning 4–286 (YETLGKVGEG…STDLLHHDYF (283 aa)) is the Protein kinase domain. Residues 10-18 (VGEGSYGTV) and Lys33 each bind ATP. Residues 45–51 (KIATREI) carry the [NKR]KIAxRE motif. Asp125 (proton acceptor) is an active-site residue. Residue Thr158 is modified to Phosphothreonine. Residue Tyr160 is modified to Phosphotyrosine. Over residues 368 to 403 (GKGDVPDLKKTESEGEHRQQGTAEDTHPTSLDRKPS) the composition is skewed to basic and acidic residues. The interval 368–512 (GKGDVPDLKK…NDQIASGNKR (145 aa)) is disordered. Low complexity predominate over residues 436–452 (NLTSSNLLAANPSSNLS). 2 stretches are compositionally biased toward polar residues: residues 468–491 (SSQTIGQTLSNSRQEDTGPTQVQT) and 499–508 (RTGQNDQIAS).

It belongs to the protein kinase superfamily. CMGC Ser/Thr protein kinase family. CDC2/CDKX subfamily. Highly expressed in brain, and to a lower extent in heart and testis.

The protein localises to the nucleus. The protein resides in the cytoplasm. It carries out the reaction L-seryl-[protein] + ATP = O-phospho-L-seryl-[protein] + ADP + H(+). The enzyme catalyses L-threonyl-[protein] + ATP = O-phospho-L-threonyl-[protein] + ADP + H(+). The chain is Cyclin-dependent kinase-like 3 from Rattus norvegicus (Rat).